The primary structure comprises 278 residues: HTH-type transcriptional activator RhaS (278 aa).

Residues 174 to 272 (NHLIAWLEDH…GWSPREIRQG (99 aa)) enclose the HTH araC/xylS-type domain. 2 consecutive DNA-binding regions (H-T-H motif) follow at residues 191 to 212 (EAIA…KQHT) and 239 to 262 (VTHI…RREF).

As to quaternary structure, binds DNA as a dimer.

The protein resides in the cytoplasm. Functionally, activates expression of the rhaBAD and rhaT operons. In Escherichia fergusonii (strain ATCC 35469 / DSM 13698 / CCUG 18766 / IAM 14443 / JCM 21226 / LMG 7866 / NBRC 102419 / NCTC 12128 / CDC 0568-73), this protein is HTH-type transcriptional activator RhaS.